Reading from the N-terminus, the 509-residue chain is FAD-linked oxidoreductase anuG (509 aa).

The first 21 residues, 1–21 (MVQISNVWGFGLAIMASLAAA), serve as a signal peptide directing secretion. In terms of domain architecture, FAD-binding PCMH-type spans 75–246 (YAAPKFTVVV…TSFEMSIYPT (172 aa)).

Belongs to the oxygen-dependent FAD-linked oxidoreductase family. FAD is required as a cofactor.

The catalysed reaction is (2S,9S)-annullatin H + 2 A = (2S,9S)-annullatin D + 2 AH2. It functions in the pathway secondary metabolite biosynthesis. In terms of biological role, cytochrome P450 monooxygenase; part of the gene cluster that mediates the biosynthesis of annullatin D, an alkylated aromatic polyketide with a fused dihydrobenzofuran lactone ring system that exhibits potent agonistic activities toward the cannabinoid receptors. Within the pathway, anuG is responsible for the five-member lactone ring formation in (2S, 9S)-annullatin D via oxidative lactonization between the two hydroxyl groups. The annullatin backbone 2-hydroxymethyl-3-pentylphenol is assembled from one acetyl-CoA starter unit and 5 malonyl-CoA elongation units by cooperation of the highly reducing polyketide synthase anuA, the short-chain dehydrogenase anuB and the oxidoreductase anuC, before being hydroxylated at the C-5 alkyl chain by the cytochrome P450 monooxygenase anuE to form (8S)-annullatin E. The prenyltransferase anuH subsequently installs one isoprenyl group at the benzene ring to form (8S)-annullatin J. Enzymatic or nonenzymatic dihydro-benzofuran ring formation between the prenyl and the phenolic hydroxyl groups in (8S)-annullatin J results in two diastereomers (2S,9S)-annullatin H and compound 12. The intermediate (2S,9S)-annullatin H is then converted to (2S,9S)-annullatin D by the FAD-linked oxidoreductase anuG-catalyzed five-member lactone ring formation. The isomer 12 acts as a substrate for the short-chain dehydrogenase anuF and is oxidized to (2R)-annullatin F, which is subsequently acetylated by an acetyltransferase leading to (2R)-annullatin G formation. The remaining enzymes identified within the cluster, anuD, anuI and anuJ, seem not to be involved in annullatin biosynthesis. The sequence is that of FAD-linked oxidoreductase anuG from Penicillium roqueforti (strain FM164).